Reading from the N-terminus, the 248-residue chain is Ribonuclease PH (248 aa).

Phosphate-binding positions include arginine 86 and 124 to 126 (GTR).

The protein belongs to the RNase PH family. In terms of assembly, homohexameric ring arranged as a trimer of dimers.

It catalyses the reaction tRNA(n+1) + phosphate = tRNA(n) + a ribonucleoside 5'-diphosphate. In terms of biological role, phosphorolytic 3'-5' exoribonuclease that plays an important role in tRNA 3'-end maturation. Removes nucleotide residues following the 3'-CCA terminus of tRNAs; can also add nucleotides to the ends of RNA molecules by using nucleoside diphosphates as substrates, but this may not be physiologically important. Probably plays a role in initiation of 16S rRNA degradation (leading to ribosome degradation) during starvation. This chain is Ribonuclease PH, found in Listeria welshimeri serovar 6b (strain ATCC 35897 / DSM 20650 / CCUG 15529 / CIP 8149 / NCTC 11857 / SLCC 5334 / V8).